The following is a 449-amino-acid chain: Neuraminidase (449 aa).

Over 1–6 (MNPNQK) the chain is Intravirion. Residues 7-27 (IITIGSICMVIGIVSLMLQIG) traverse the membrane as a helical segment. The segment at 11-33 (GSICMVIGIVSLMLQIGNIISIW) is involved in apical transport and lipid raft association. Topologically, residues 28-449 (NIISIWVSHS…GAELPFTIDK (422 aa)) are virion surface. A hypervariable stalk region region spans residues 36 to 70 (HSIQTGNQHQAEPISNTNFLTEKAVASVTLAGNSS). A glycan (N-linked (GlcNAc...) asparagine; by host) is linked at Asn68. The head of neuraminidase stretch occupies residues 71–449 (LCPISGWAVH…GAELPFTIDK (379 aa)). Intrachain disulfides connect Cys72-Cys397, Cys104-Cys109, Cys164-Cys211, Cys213-Cys218, Cys259-Cys272, Cys261-Cys270, Cys298-Cys315, and Cys401-Cys426. Arg98 is a substrate binding site. An N-linked (GlcNAc...) asparagine; by host glycan is attached at Asn126. Asp131 serves as the catalytic Proton donor/acceptor. Residue Arg132 participates in substrate binding. Asn215 carries an N-linked (GlcNAc...) asparagine; by host glycan. 257–258 (EE) contributes to the substrate binding site. Arg273 is a substrate binding site. Ca(2+)-binding residues include Asp274, Gly278, and Asp304. Residue Arg348 participates in substrate binding. The active-site Nucleophile is the Tyr382.

This sequence belongs to the glycosyl hydrolase 34 family. In terms of assembly, homotetramer. The cofactor is Ca(2+). Post-translationally, N-glycosylated.

Its subcellular location is the virion membrane. It is found in the host apical cell membrane. The enzyme catalyses Hydrolysis of alpha-(2-&gt;3)-, alpha-(2-&gt;6)-, alpha-(2-&gt;8)- glycosidic linkages of terminal sialic acid residues in oligosaccharides, glycoproteins, glycolipids, colominic acid and synthetic substrates.. With respect to regulation, inhibited by the neuraminidase inhibitors zanamivir (Relenza) and oseltamivir (Tamiflu). These drugs interfere with the release of progeny virus from infected cells and are effective against all influenza strains. Resistance to neuraminidase inhibitors is quite rare. Catalyzes the removal of terminal sialic acid residues from viral and cellular glycoconjugates. Cleaves off the terminal sialic acids on the glycosylated HA during virus budding to facilitate virus release. Additionally helps virus spread through the circulation by further removing sialic acids from the cell surface. These cleavages prevent self-aggregation and ensure the efficient spread of the progeny virus from cell to cell. Otherwise, infection would be limited to one round of replication. Described as a receptor-destroying enzyme because it cleaves a terminal sialic acid from the cellular receptors. May facilitate viral invasion of the upper airways by cleaving the sialic acid moieties on the mucin of the airway epithelial cells. Likely to plays a role in the budding process through its association with lipid rafts during intracellular transport. May additionally display a raft-association independent effect on budding. Plays a role in the determination of host range restriction on replication and virulence. Sialidase activity in late endosome/lysosome traffic seems to enhance virus replication. The sequence is that of Neuraminidase from Aves (Cat).